Consider the following 190-residue polypeptide: Interferon alpha-7 (190 aa).

Positions 1–23 are cleaved as a signal peptide; the sequence is MARLCAFLMVLAVMSYWPTCCLG. Cystine bridges form between Cys24–Cys122 and Cys52–Cys162. Asn101 carries N-linked (GlcNAc...) asparagine glycosylation.

It belongs to the alpha/beta interferon family.

It localises to the secreted. Produced by macrophages, IFN-alpha have antiviral activities. Interferon stimulates the production of two enzymes: a protein kinase and an oligoadenylate synthetase. This is Interferon alpha-7 (Ifna7) from Mus musculus (Mouse).